Here is a 57-residue protein sequence, read N- to C-terminus: DNA gyrase inhibitor YacG (57 aa).

Zn(2+) contacts are provided by Cys10, Cys13, Cys25, and Cys29.

Belongs to the DNA gyrase inhibitor YacG family. Interacts with GyrB. Zn(2+) is required as a cofactor.

Its function is as follows. Inhibits all the catalytic activities of DNA gyrase by preventing its interaction with DNA. Acts by binding directly to the C-terminal domain of GyrB, which probably disrupts DNA binding by the gyrase. The sequence is that of DNA gyrase inhibitor YacG from Brucella abortus (strain 2308).